Here is a 1487-residue protein sequence, read N- to C-terminus: Murinoglobulin-1 (1487 aa).

The first 24 residues, 1–24, serve as a signal peptide directing secretion; sequence MKKNREAQLCLFSALLAFLPFASL. Residues Cys-48 and Cys-86 are joined by a disulfide bond. N-linked (GlcNAc...) asparagine glycosylation is found at Asn-55 and Asn-247. 2 cysteine pairs are disulfide-bonded: Cys-251–Cys-283 and Cys-269–Cys-295. N-linked (GlcNAc...) asparagine glycosylation is found at Asn-301, Asn-321, Asn-393, and Asn-508. Disulfide bonds link Cys-468–Cys-563, Cys-595–Cys-784, and Cys-643–Cys-689. Residues 686–745 form a bait region region; that stretch reads PTYCYEMNMVVLSAPAVESELSPRGGEFEMMPLGVNKSPLPKEPPRKDPPPKDPVIETIR. Residues Asn-760, Asn-787, and Asn-882 are each glycosylated (N-linked (GlcNAc...) asparagine). Disulfide bonds link Cys-860–Cys-896, Cys-934–Cys-1334, Cys-1092–Cys-1140, and Cys-1365–Cys-1480. The isoglutamyl cysteine thioester (Cys-Gln) cross-link spans 985-988; the sequence is CGEQ. N-linked (GlcNAc...) asparagine glycosylation occurs at Asn-1004. N-linked (GlcNAc...) asparagine glycosylation is found at Asn-1153, Asn-1324, and Asn-1437.

Belongs to the protease inhibitor I39 (alpha-2-macroglobulin) family. In terms of assembly, monomer. In terms of tissue distribution, plasma.

The protein localises to the secreted. In terms of biological role, a proteinase activates the inhibitor by specific proteolysis in the bait region, which, by an unknown mechanism leads to reaction at the cysteinyl-glutamyl internal thiol ester site and to a conformational change, whereby the proteinase is trapped and/or covalently bound to the inhibitor. While in the tetrameric proteinase inhibitors steric inhibition is sufficiently strong, monomeric forms need a covalent linkage between the activated glutamyl residue of the original thiol ester and a terminal amino group of a lysine or another nucleophilic group on the proteinase, for inhibition to be effective. The sequence is that of Murinoglobulin-1 from Rattus norvegicus (Rat).